A 120-amino-acid chain; its full sequence is Small ribosomal subunit protein uS13 (120 aa).

Positions 94–120 (GLPLRGQRTRTNARTRKGPRKAIAGKK) are disordered.

The protein belongs to the universal ribosomal protein uS13 family. In terms of assembly, part of the 30S ribosomal subunit. Forms a loose heterodimer with protein S19. Forms two bridges to the 50S subunit in the 70S ribosome.

Its function is as follows. Located at the top of the head of the 30S subunit, it contacts several helices of the 16S rRNA. In the 70S ribosome it contacts the 23S rRNA (bridge B1a) and protein L5 of the 50S subunit (bridge B1b), connecting the 2 subunits; these bridges are implicated in subunit movement. Contacts the tRNAs in the A and P-sites. The chain is Small ribosomal subunit protein uS13 from Aromatoleum aromaticum (strain DSM 19018 / LMG 30748 / EbN1) (Azoarcus sp. (strain EbN1)).